The sequence spans 415 residues: WD-40 repeat-containing protein MSI2 (415 aa).

WD repeat units follow at residues 166–206 (GHDK…QDKV), 215–255 (GHES…MQHQ), 258–298 (VHER…APLH), 302–342 (SHEG…EEQL), and 361–401 (GHKA…YRDE). Positions 232–248 (LFGSAGEDGRLVIWDTR) match the DWD box motif.

The protein belongs to the WD repeat RBAP46/RBAP48/MSI1 family.

It localises to the nucleus. Its function is as follows. Core histone-binding subunit that may target chromatin assembly factors, chromatin remodeling factors and histone deacetylases to their histone substrates in a manner that is regulated by nucleosomal DNA. This Arabidopsis thaliana (Mouse-ear cress) protein is WD-40 repeat-containing protein MSI2 (MSI2).